The chain runs to 238 residues: SPbeta prophage-derived uncharacterized protein YorM (238 aa).

A signal peptide spans 1-37 (MFKKLIDKHKKYVYHRINKMALFATIGLLGVGLVYSA). The span at 111–121 (TKTKKVQKTNT) shows a compositional bias: basic residues. The segment at 111-132 (TKTKKVQKTNTKRNLDKAVSKS) is disordered.

This chain is SPbeta prophage-derived uncharacterized protein YorM (yorM), found in Bacillus subtilis (strain 168).